The following is a 313-amino-acid chain: Porphobilinogen deaminase (313 aa).

The residue at position 242 (Cys242) is an S-(dipyrrolylmethanemethyl)cysteine.

It belongs to the HMBS family. As to quaternary structure, monomer. Requires dipyrromethane as cofactor.

The catalysed reaction is 4 porphobilinogen + H2O = hydroxymethylbilane + 4 NH4(+). Its pathway is porphyrin-containing compound metabolism; protoporphyrin-IX biosynthesis; coproporphyrinogen-III from 5-aminolevulinate: step 2/4. Tetrapolymerization of the monopyrrole PBG into the hydroxymethylbilane pre-uroporphyrinogen in several discrete steps. In Photorhabdus laumondii subsp. laumondii (strain DSM 15139 / CIP 105565 / TT01) (Photorhabdus luminescens subsp. laumondii), this protein is Porphobilinogen deaminase.